The sequence spans 119 residues: uncharacterized protein (119 aa).

Positions 1–23 are cleaved as a signal peptide; the sequence is MVKWAVSILVNALLLIVIDGYID. 3 helical membrane passes run 27 to 47, 50 to 70, and 88 to 108; these read ISSI…NVLI, LLII…LFVI, and IDGF…HLLI.

The protein localises to the cell membrane. This is an uncharacterized protein from Bacillus subtilis (strain 168).